The following is a 218-amino-acid chain: Cytochrome c biogenesis ATP-binding export protein CcmA (218 aa).

The region spanning 2-217 is the ABC transporter domain; it reads LEAKNLTCIR…KSCLSACCAV (216 aa). 34–41 provides a ligand contact to ATP; it reads GPNGAGKT.

Belongs to the ABC transporter superfamily. CcmA exporter (TC 3.A.1.107) family. In terms of assembly, the complex is composed of two ATP-binding proteins (CcmA) and two transmembrane proteins (CcmB).

It localises to the cell inner membrane. It carries out the reaction heme b(in) + ATP + H2O = heme b(out) + ADP + phosphate + H(+). Its function is as follows. Part of the ABC transporter complex CcmAB involved in the biogenesis of c-type cytochromes; once thought to export heme, this seems not to be the case, but its exact role is uncertain. Responsible for energy coupling to the transport system. In Yersinia pseudotuberculosis serotype I (strain IP32953), this protein is Cytochrome c biogenesis ATP-binding export protein CcmA.